The sequence spans 355 residues: Anhydro-N-acetylmuramic acid kinase (355 aa).

Residue 9–16 (GTSLDGVD) coordinates ATP.

It belongs to the anhydro-N-acetylmuramic acid kinase family.

It catalyses the reaction 1,6-anhydro-N-acetyl-beta-muramate + ATP + H2O = N-acetyl-D-muramate 6-phosphate + ADP + H(+). It functions in the pathway amino-sugar metabolism; 1,6-anhydro-N-acetylmuramate degradation. The protein operates within cell wall biogenesis; peptidoglycan recycling. In terms of biological role, catalyzes the specific phosphorylation of 1,6-anhydro-N-acetylmuramic acid (anhMurNAc) with the simultaneous cleavage of the 1,6-anhydro ring, generating MurNAc-6-P. Is required for the utilization of anhMurNAc either imported from the medium or derived from its own cell wall murein, and thus plays a role in cell wall recycling. In Paramagnetospirillum magneticum (strain ATCC 700264 / AMB-1) (Magnetospirillum magneticum), this protein is Anhydro-N-acetylmuramic acid kinase.